The sequence spans 194 residues: Outer-membrane lipoprotein LolB (194 aa).

The first 18 residues, 1 to 18 (MTLFLRIFTFGCLLLLAG), serve as a signal peptide directing secretion. Cys-19 is lipidated: N-palmitoyl cysteine. Cys-19 carries the S-diacylglycerol cysteine lipid modification.

This sequence belongs to the LolB family. As to quaternary structure, monomer.

It localises to the cell outer membrane. Plays a critical role in the incorporation of lipoproteins in the outer membrane after they are released by the LolA protein. The polypeptide is Outer-membrane lipoprotein LolB (Aeromonas salmonicida (strain A449)).